Here is a 207-residue protein sequence, read N- to C-terminus: Large ribosomal subunit protein uL4 (207 aa).

Residues 44–76 (RRQGTQSTKTKSEVRGGGKKPWRQKGTGRARQG) are disordered. A compositionally biased stretch (basic residues) spans 60–71 (GGKKPWRQKGTG).

Belongs to the universal ribosomal protein uL4 family. As to quaternary structure, part of the 50S ribosomal subunit.

Functionally, one of the primary rRNA binding proteins, this protein initially binds near the 5'-end of the 23S rRNA. It is important during the early stages of 50S assembly. It makes multiple contacts with different domains of the 23S rRNA in the assembled 50S subunit and ribosome. Its function is as follows. Forms part of the polypeptide exit tunnel. This Ruminiclostridium cellulolyticum (strain ATCC 35319 / DSM 5812 / JCM 6584 / H10) (Clostridium cellulolyticum) protein is Large ribosomal subunit protein uL4.